Reading from the N-terminus, the 347-residue chain is Anthranilate phosphoribosyltransferase (347 aa).

5-phospho-alpha-D-ribose 1-diphosphate is bound by residues Gly82, 85–86 (GD), Thr90, 92–95 (NIST), 110–118 (KHGNRAITS), and Thr122. Position 82 (Gly82) interacts with anthranilate. Ser94 contributes to the Mg(2+) binding site. Residue Asn113 coordinates anthranilate. An anthranilate-binding site is contributed by Arg168. Residues Asp226 and Glu227 each coordinate Mg(2+).

This sequence belongs to the anthranilate phosphoribosyltransferase family. In terms of assembly, homodimer. It depends on Mg(2+) as a cofactor.

The enzyme catalyses N-(5-phospho-beta-D-ribosyl)anthranilate + diphosphate = 5-phospho-alpha-D-ribose 1-diphosphate + anthranilate. It functions in the pathway amino-acid biosynthesis; L-tryptophan biosynthesis; L-tryptophan from chorismate: step 2/5. Catalyzes the transfer of the phosphoribosyl group of 5-phosphorylribose-1-pyrophosphate (PRPP) to anthranilate to yield N-(5'-phosphoribosyl)-anthranilate (PRA). The chain is Anthranilate phosphoribosyltransferase from Caulobacter sp. (strain K31).